The following is a 629-amino-acid chain: tRNA uridine 5-carboxymethylaminomethyl modification enzyme MnmG (629 aa).

FAD-binding positions include 13–18 (GGGHAG), Val125, and Ser180. Residue 273–287 (GPRYCPSIEDKVMRF) participates in NAD(+) binding. Residue Gln370 participates in FAD binding.

The protein belongs to the MnmG family. Homodimer. Heterotetramer of two MnmE and two MnmG subunits. Requires FAD as cofactor.

It localises to the cytoplasm. In terms of biological role, NAD-binding protein involved in the addition of a carboxymethylaminomethyl (cmnm) group at the wobble position (U34) of certain tRNAs, forming tRNA-cmnm(5)s(2)U34. This is tRNA uridine 5-carboxymethylaminomethyl modification enzyme MnmG from Shigella flexneri serotype 5b (strain 8401).